The primary structure comprises 243 residues: DNA repair protein RecO (243 aa).

This sequence belongs to the RecO family.

In terms of biological role, involved in DNA repair and RecF pathway recombination. This chain is DNA repair protein RecO, found in Caulobacter vibrioides (strain NA1000 / CB15N) (Caulobacter crescentus).